The following is a 370-amino-acid chain: Platelet-derived growth factor D (370 aa).

Residues 1–18 (MHRLIFVYTLICANFCSC) form the signal peptide. The CUB domain maps to 52–170 (RDETIQVKGN…PGFKIYYSLL (119 aa)). Residues cysteine 109 and cysteine 131 are joined by a disulfide bond. A glycan (N-linked (GlcNAc...) asparagine) is linked at asparagine 276. Disulfide bonds link cysteine 302–cysteine 360 and cysteine 306–cysteine 362.

Belongs to the PDGF/VEGF growth factor family. As to quaternary structure, homodimer; disulfide-linked. Interacts with PDGFRB homodimers, and with heterodimers formed by PDGFRA and PDGFRB. In terms of processing, activated by proteolytic cleavage. Proteolytic removal of the N-terminal CUB domain releasing the core domain is necessary for unmasking the receptor-binding epitopes of the core domain. Cleavage after Arg-247 or Arg-249 by urokinase plasminogen activator gives rise to the active form. In terms of tissue distribution, expressed at high levels in the heart, pancreas, adrenal gland and ovary and at low levels in placenta, liver, kidney, prostate, testis, small intestine, spleen and colon. In the kidney, expressed by the visceral epithelial cells of the glomeruli. A widespread expression is also seen in the medial smooth muscle cells of arteries and arterioles, as well as in smooth muscle cells of vasa rectae in the medullary area. Expressed in the adventitial connective tissue surrounding the suprarenal artery. In chronic obstructive nephropathy, a persistent expression is seen in glomerular visceral epithelial cells and vascular smooth muscle cells, as well as de novo expression by periglomerular interstitial cells and by some neointimal cells of atherosclerotic vessels. Expression in normal prostate is seen preferentially in the mesenchyme of the gland while expression is increased and more profuse in prostate carcinoma. Expressed in many ovarian, lung, renal and brain cancer-derived cell lines.

It is found in the secreted. Functionally, growth factor that plays an essential role in the regulation of embryonic development, cell proliferation, cell migration, survival and chemotaxis. Potent mitogen for cells of mesenchymal origin. Plays an important role in wound healing. Induces macrophage recruitment, increased interstitial pressure, and blood vessel maturation during angiogenesis. Can initiate events that lead to a mesangial proliferative glomerulonephritis, including influx of monocytes and macrophages and production of extracellular matrix. The protein is Platelet-derived growth factor D (PDGFD) of Homo sapiens (Human).